The primary structure comprises 387 residues: Cytochrome b (387 aa).

4 helical membrane-spanning segments follow: residues 32–52 (FGSL…LLAC), 76–98 (FLLR…LHIG), 113–133 (TWNI…LGYC), and 179–199 (FFSL…MHLI). Positions 82 and 96 each coordinate heme b. Histidine 183 and histidine 197 together coordinate heme b. Histidine 202 contributes to the a ubiquinone binding site. 4 consecutive transmembrane segments (helical) span residues 225 to 245 (YLIK…YMAF), 289 to 309 (QLGV…PLLD), 321 to 341 (FGKF…WIGG), and 348 to 368 (FITI…ILIP).

Belongs to the cytochrome b family. As to quaternary structure, fungal cytochrome b-c1 complex contains 10 subunits; 3 respiratory subunits, 2 core proteins and 5 low-molecular weight proteins. Cytochrome b-c1 complex is a homodimer. The cofactor is heme b.

It localises to the mitochondrion inner membrane. Component of the ubiquinol-cytochrome c reductase complex (complex III or cytochrome b-c1 complex) that is part of the mitochondrial respiratory chain. The b-c1 complex mediates electron transfer from ubiquinol to cytochrome c. Contributes to the generation of a proton gradient across the mitochondrial membrane that is then used for ATP synthesis. The polypeptide is Cytochrome b (cob) (Schizosaccharomyces pombe (strain 972 / ATCC 24843) (Fission yeast)).